Here is a 483-residue protein sequence, read N- to C-terminus: UDP-N-acetylmuramyl-tripeptide synthetase (483 aa).

Position 43 (serine 43) interacts with UDP-N-acetyl-alpha-D-muramoyl-L-alanyl-D-glutamate. An ATP-binding site is contributed by 116-122 (GTKGKTT). Residues 160 to 161 (TT), serine 187, and arginine 195 each bind UDP-N-acetyl-alpha-D-muramoyl-L-alanyl-D-glutamate. The residue at position 229 (lysine 229) is an N6-carboxylysine.

Belongs to the MurCDEF family. MurE subfamily. In terms of processing, carboxylation is probably crucial for Mg(2+) binding and, consequently, for the gamma-phosphate positioning of ATP.

It localises to the cytoplasm. Its pathway is cell wall biogenesis; peptidoglycan biosynthesis. In terms of biological role, catalyzes the addition of an amino acid to the nucleotide precursor UDP-N-acetylmuramoyl-L-alanyl-D-glutamate (UMAG) in the biosynthesis of bacterial cell-wall peptidoglycan. This chain is UDP-N-acetylmuramyl-tripeptide synthetase, found in Lactococcus lactis subsp. cremoris (strain MG1363).